The following is an 89-amino-acid chain: Small ribosomal subunit protein uS14 (89 aa).

Belongs to the universal ribosomal protein uS14 family. As to quaternary structure, part of the 30S ribosomal subunit. Contacts proteins S3 and S10.

Binds 16S rRNA, required for the assembly of 30S particles and may also be responsible for determining the conformation of the 16S rRNA at the A site. The chain is Small ribosomal subunit protein uS14 from Chlorobaculum parvum (strain DSM 263 / NCIMB 8327) (Chlorobium vibrioforme subsp. thiosulfatophilum).